The following is a 442-amino-acid chain: Small RNA 2'-O-methyltransferase (442 aa).

Residues Gly125 and Asp151 each coordinate S-adenosyl-L-methionine. Glu209, Glu212, His213, and His260 together coordinate Mg(2+).

Belongs to the methyltransferase superfamily. HEN1 family. The cofactor is Mg(2+). Broadly expressed in the germline and somatic tissues in both hermaphrodites and males.

It localises to the cytoplasm. The protein localises to the nucleus. Its subcellular location is the nucleoplasm. It is found in the cytoplasmic granule. It catalyses the reaction small RNA 3'-end nucleotide + S-adenosyl-L-methionine = small RNA 3'-end 2'-O-methylnucleotide + S-adenosyl-L-homocysteine + H(+). Its function is as follows. Methyltransferase that adds a 2'-O-methyl group at the 3'-end of PIWI-interacting RNAs (piRNAs) and small interfering RNAs (siRNAs) which are classes of regulatory RNAs that are involved in gene silencing in endogenous RNA interference (RNAi) pathways. Methylation protects the 3'-end of small RNAs from tailing and trimming and could constitute a recognition signal for appropriate argonaute machineries. Methylates and stabilizes 26G-siRNAs (a class of 26 nucleotide siRNAs that possess a monophosphorylated guanine residue at the 5'-end) when they are bound by argonaute protein ergo-1. This occurs in the female germline and embryo, but not in the male germline. Does not methylate 26G-siRNAs bound by argonaute proteins alg-3 or alg-4. Methylates and stabilizes 21U-piRNAs, which are a class of 21 nucleotide piRNAs that possess a uracil residue at the 5'-end, in the male and female germline. In addition, may play a role in exogenous RNAi (exoRNAi) pathways in the germline. This is Small RNA 2'-O-methyltransferase from Caenorhabditis elegans.